The sequence spans 178 residues: uncharacterized protein (178 aa).

Residues Met-1–Pro-16 are compositionally biased toward basic and acidic residues. The segment at Met-1–Pro-43 is disordered.

This is an uncharacterized protein from Homo sapiens (Human).